Reading from the N-terminus, the 360-residue chain is Peptide chain release factor 1 (360 aa).

Residue Gln-235 is modified to N5-methylglutamine.

This sequence belongs to the prokaryotic/mitochondrial release factor family. Methylated by PrmC. Methylation increases the termination efficiency of RF1.

The protein resides in the cytoplasm. Peptide chain release factor 1 directs the termination of translation in response to the peptide chain termination codons UAG and UAA. The sequence is that of Peptide chain release factor 1 from Cupriavidus pinatubonensis (strain JMP 134 / LMG 1197) (Cupriavidus necator (strain JMP 134)).